A 332-amino-acid polypeptide reads, in one-letter code: Succinylglutamate desuccinylase (332 aa).

The Zn(2+) site is built by H59, E62, and H151. Residue E215 is part of the active site.

It belongs to the AspA/AstE family. Succinylglutamate desuccinylase subfamily. Requires Zn(2+) as cofactor.

The enzyme catalyses N-succinyl-L-glutamate + H2O = L-glutamate + succinate. It functions in the pathway amino-acid degradation; L-arginine degradation via AST pathway; L-glutamate and succinate from L-arginine: step 5/5. In terms of biological role, transforms N(2)-succinylglutamate into succinate and glutamate. This chain is Succinylglutamate desuccinylase, found in Pseudomonas aeruginosa (strain LESB58).